The chain runs to 147 residues: Holo-[acyl-carrier-protein] synthase (147 aa).

Mg(2+) contacts are provided by aspartate 7 and glutamate 60.

It belongs to the P-Pant transferase superfamily. AcpS family. Requires Mg(2+) as cofactor.

Its subcellular location is the cytoplasm. The catalysed reaction is apo-[ACP] + CoA = holo-[ACP] + adenosine 3',5'-bisphosphate + H(+). In terms of biological role, transfers the 4'-phosphopantetheine moiety from coenzyme A to a Ser of acyl-carrier-protein. The polypeptide is Holo-[acyl-carrier-protein] synthase (Bifidobacterium animalis subsp. lactis (strain AD011)).